A 253-amino-acid chain; its full sequence is Trypsin delta (253 aa).

Residues M1–G22 form the signal peptide. Residues L23 to R30 constitute a propeptide, activation peptide. In terms of domain architecture, Peptidase S1 spans I31–A253. Residues C56 and C72 are joined by a disulfide bond. Residues H71 and D116 each act as charge relay system in the active site. 2 disulfide bridges follow: C180–C197 and C206–C230. The active-site Charge relay system is S210.

It belongs to the peptidase S1 family.

The protein localises to the secreted. Its subcellular location is the extracellular space. The enzyme catalyses Preferential cleavage: Arg-|-Xaa, Lys-|-Xaa.. The polypeptide is Trypsin delta (Drosophila melanogaster (Fruit fly)).